An 873-amino-acid chain; its full sequence is Zinc fingers and homeoboxes protein 1 (873 aa).

Residues 24 to 63 (LISDLDEGPPVLTPVENTRAESISSDEEVHESVDSDNQQN) are disordered. Threonine 36 is modified (phosphothreonine). Phosphoserine occurs at positions 45, 47, and 48. C2H2-type zinc fingers lie at residues 70–93 (YECK…DSEH) and 102–125 (YVCV…LKYH). Lysine 159 participates in a covalent cross-link: Glycyl lysine isopeptide (Lys-Gly) (interchain with G-Cter in SUMO2). At serine 202 the chain carries Phosphoserine. Residues 202–236 (SVEDVPEEKENEIKPDREEIVENPSSSASESNTST) form a disordered region. Residues 212 to 221 (NEIKPDREEI) show a composition bias toward basic and acidic residues. The segment covering 223–236 (ENPSSSASESNTST) has biased composition (low complexity). The segment at 272–432 (NSNLIPKVLI…QNNIQKSQVP (161 aa)) is required for dimerization. Residues 272–564 (NSNLIPKVLI…AQPKQSWNPF (293 aa)) form a required for interaction with NFYA region. The homeobox 1 DNA-binding region spans 284–346 (NSIPTYNAAL…LKHGVSWTPE (63 aa)). Residues lysine 441, lysine 454, lysine 485, and lysine 629 each participate in a glycyl lysine isopeptide (Lys-Gly) (interchain with G-Cter in SUMO2) cross-link. 2 DNA-binding regions (homeobox) span residues 464 to 526 (SFGI…KSNQ) and 569 to 630 (PQKF…EEKM). Disordered stretches follow at residues 626–667 (KEEK…ICKK) and 732–770 (SSMN…NNWD). Serine 648 is modified (phosphoserine). Residues 660–722 (STGKICKKTP…YAWKNGNLKW (63 aa)) constitute a DNA-binding region (homeobox 4). The required for nuclear localization stretch occupies residues 734–768 (MNGLSSLRKRGRGRPKGRGRGRPRGRPRGSKRINN). The segment covering 740–764 (LRKRGRGRPKGRGRGRPRGRPRGSK) has biased composition (basic residues). Serine 774 carries the post-translational modification Phosphoserine. A DNA-binding region (homeobox 5) is located at residues 777–832 (KFKTGTAILKDYYLKHKFLNEQDLDELVNKSHMGYEQVREWFAERQRRSELGIELF). Positions 829–873 (IELFEENEEEDEVIDDQEEDEEETDDSDTWEPPRHVKRKLSKSDD) are disordered. Residues 831-857 (LFEENEEEDEVIDDQEEDEEETDDSDT) show a composition bias toward acidic residues. Residues 831-873 (LFEENEEEDEVIDDQEEDEEETDDSDTWEPPRHVKRKLSKSDD) are required for repressor activity. Residues 863–873 (HVKRKLSKSDD) show a composition bias toward basic residues.

Belongs to the ZHX family. In terms of assembly, forms homodimers. Heterodimer (via HD1 domain) with ZHX2 (via HD1 domain). Also forms a heterodimer with ZHX3 which is a prerequisite for repressor activity. Interacts with ATF7IP and NFYA. Interacts (via homeobox domains) with DNMT3B (via PWWP domain). In terms of tissue distribution, ubiquitously expressed. Expressed in podocytes.

Its subcellular location is the nucleus. In terms of biological role, acts as a transcriptional repressor. Increases DNMT3B-mediated repressive transcriptional activity when DNMT3B is tethered to DNA. May link molecule between DNMT3B and other co-repressor proteins. This is Zinc fingers and homeoboxes protein 1 (ZHX1) from Homo sapiens (Human).